A 491-amino-acid chain; its full sequence is MGILWDSFLLLLVSTFALFLVRILLFKTGLIYMVKLWRRKIIDWFHVYQFYKVPEFNDNVQENHLYQKVYMYLNSLSSIENSDFTNLFTGKKSNEIILRLDRNQVVGDEFLGARVCWINGEDEDGARNFVLKIRKADKRRILGSYLQHIHTVSDELEQRNTELKLFINVGIDDHLNKKKKKNGRWRSIPFDHPCTFDNIAMETDLKNKVKSDLESFLKGKQYYNRLGRVWKRSYLLYGPSGTGKSSFVAAMANFLDYDVYDIDLSKVVDDSDLKMLLLQTRGKSVIVIEDLDRHLSTKSTAVNLSGILNFTDSILSSCTADERIMVFTMTGKEQIDPAMLRPGRVDVHIHFPLCDFTAFKTLANNYLGVKEHKLFSQVEGIFQNGASLSPAEIGELMIANRNSPTRALKHVINALQTDGDRRGTGRRLLLENGSRKSTSEDVSDDMSGSLCGGGGGSSPAVKEFRKLYGLLRIKSSRKSGSFDVAREMRDG.

Residues 1-21 traverse the membrane as a helical segment; that stretch reads MGILWDSFLLLLVSTFALFLV. 238–245 contacts ATP; that stretch reads GPSGTGKS. A disordered region spans residues 423–460; it reads GTGRRLLLENGSRKSTSEDVSDDMSGSLCGGGGGSSPA.

Belongs to the AAA ATPase family. BCS1 subfamily. Mg(2+) serves as cofactor.

The protein resides in the membrane. It catalyses the reaction ATP + H2O = ADP + phosphate + H(+). The protein is AAA-ATPase At2g46620 of Arabidopsis thaliana (Mouse-ear cress).